The following is a 1324-amino-acid chain: Ubiquitin carboxyl-terminal hydrolase 42 (1324 aa).

2 disordered regions span residues 1-38 (MTIV…SASW) and 63-87 (YSSS…DGIA). Residues 10–25 (SSDPSAYQNQPGSSEA) are compositionally biased toward polar residues. A compositionally biased stretch (low complexity) spans 63-80 (YSSSSVPDKSKPSPQKDQ). Residue Ser75 is modified to Phosphoserine. The 302-residue stretch at 111–412 (AGLQNLGNTC…QAYVLFYIRS (302 aa)) folds into the USP domain. Cys120 (nucleophile) is an active-site residue. His371 acts as the Proton acceptor in catalysis. 6 disordered regions span residues 452–494 (IGPQ…NRAS), 536–707 (QSQP…MPAP), 722–1026 (LSNK…RHRS), 1085–1131 (RAGL…HPDR), 1149–1254 (DRFH…VKDS), and 1275–1294 (GGFP…FREK). The span at 477–489 (PSSSMSSPNGNSS) shows a compositional bias: low complexity. Phosphoserine is present on Ser483. Residues 536–564 (QSQPNLHSNSLENPTKPVPSSTITNSAVQ) show a composition bias toward polar residues. A compositionally biased stretch (low complexity) spans 565 to 576 (STSNASTMSVSS). Polar residues predominate over residues 586–603 (ESCSQPVMNGKSKLNSSV). Ser754 and Ser856 each carry phosphoserine. Basic and acidic residues-rich tracts occupy residues 938–974 (AKEK…SKTE), 984–1013 (CPRE…ERRS), 1101–1113 (RGCE…ERHR), 1149–1158 (DRFHEHENGK), and 1165–1191 (DSVE…EEPK). The residue at position 1181 (Ser1181) is a Phosphoserine. Residues 1192-1206 (AKKHKKSKKKKKSKD) show a composition bias toward basic residues. Residues 1207-1218 (KHRDRDSRHQQD) show a composition bias toward basic and acidic residues. Ser1219, Ser1222, and Ser1226 each carry phosphoserine. A compositionally biased stretch (basic residues) spans 1231–1245 (HRHKKKKKKKKRHSR). At Ser1247 the chain carries Phosphoserine.

Belongs to the peptidase C19 family. Broadly expressed.

The catalysed reaction is Thiol-dependent hydrolysis of ester, thioester, amide, peptide and isopeptide bonds formed by the C-terminal Gly of ubiquitin (a 76-residue protein attached to proteins as an intracellular targeting signal).. Deubiquitinating enzyme which may play an important role during spermatogenesis. The sequence is that of Ubiquitin carboxyl-terminal hydrolase 42 (USP42) from Homo sapiens (Human).